Reading from the N-terminus, the 114-residue chain is T cell receptor beta variable 5-5 (114 aa).

An N-terminal signal peptide occupies residues 1–21 (MGPGLLCWVLLCLLGAGPVDA). In terms of domain architecture, Ig-like spans 22–114 (GVTQSPTHLI…SALYLCASSL (93 aa)). Cysteine 42 and cysteine 110 are joined by a disulfide. An N-linked (GlcNAc...) asparagine glycan is attached at asparagine 90.

Alpha-beta TR is a heterodimer composed of an alpha and beta chain; disulfide-linked. The alpha-beta TR is associated with the transmembrane signaling CD3 coreceptor proteins to form the TR-CD3 (TcR or TCR). The assembly of alpha-beta TR heterodimers with CD3 occurs in the endoplasmic reticulum where a single alpha-beta TR heterodimer associates with one CD3D-CD3E heterodimer, one CD3G-CD3E heterodimer and one CD247 homodimer forming a stable octameric structure. CD3D-CD3E and CD3G-CD3E heterodimers preferentially associate with TR alpha and TR beta chains, respectively. The association of the CD247 homodimer is the last step of TcR assembly in the endoplasmic reticulum and is required for transport to the cell surface.

It localises to the cell membrane. Its function is as follows. V region of the variable domain of T cell receptor (TR) beta chain that participates in the antigen recognition. Alpha-beta T cell receptors are antigen specific receptors which are essential to the immune response and are present on the cell surface of T lymphocytes. Recognize peptide-major histocompatibility (MH) (pMH) complexes that are displayed by antigen presenting cells (APC), a prerequisite for efficient T cell adaptive immunity against pathogens. Binding of alpha-beta TR to pMH complex initiates TR-CD3 clustering on the cell surface and intracellular activation of LCK that phosphorylates the ITAM motifs of CD3G, CD3D, CD3E and CD247 enabling the recruitment of ZAP70. In turn ZAP70 phosphorylates LAT, which recruits numerous signaling molecules to form the LAT signalosome. The LAT signalosome propagates signal branching to three major signaling pathways, the calcium, the mitogen-activated protein kinase (MAPK) kinase and the nuclear factor NF-kappa-B (NF-kB) pathways, leading to the mobilization of transcription factors that are critical for gene expression and essential for T cell growth and differentiation. The T cell repertoire is generated in the thymus, by V-(D)-J rearrangement. This repertoire is then shaped by intrathymic selection events to generate a peripheral T cell pool of self-MH restricted, non-autoaggressive T cells. Post-thymic interaction of alpha-beta TR with the pMH complexes shapes TR structural and functional avidity. The protein is T cell receptor beta variable 5-5 of Homo sapiens (Human).